Here is a 426-residue protein sequence, read N- to C-terminus: Tryptophan--tRNA ligase (426 aa).

The short motif at 66–74 (PSGEMHLGN) is the 'HIGH' region element. Positions 314–318 (KMSSS) match the 'KMSKS' region motif.

The protein belongs to the class-I aminoacyl-tRNA synthetase family.

Its subcellular location is the cytoplasm. It catalyses the reaction tRNA(Trp) + L-tryptophan + ATP = L-tryptophyl-tRNA(Trp) + AMP + diphosphate + H(+). This Thermoplasma volcanium (strain ATCC 51530 / DSM 4299 / JCM 9571 / NBRC 15438 / GSS1) protein is Tryptophan--tRNA ligase.